An 88-amino-acid chain; its full sequence is Cell division topological specificity factor (88 aa).

It belongs to the MinE family.

Prevents the cell division inhibition by proteins MinC and MinD at internal division sites while permitting inhibition at polar sites. This ensures cell division at the proper site by restricting the formation of a division septum at the midpoint of the long axis of the cell. The chain is Cell division topological specificity factor from Herminiimonas arsenicoxydans.